Here is a 132-residue protein sequence, read N- to C-terminus: Phosphoribosyl-AMP cyclohydrolase (132 aa).

Residue Asp-86 coordinates Mg(2+). Position 87 (Cys-87) interacts with Zn(2+). Mg(2+)-binding residues include Asp-88 and Asp-90. 2 residues coordinate Zn(2+): Cys-103 and Cys-110.

This sequence belongs to the PRA-CH family. Homodimer. It depends on Mg(2+) as a cofactor. Zn(2+) serves as cofactor.

It is found in the cytoplasm. The catalysed reaction is 1-(5-phospho-beta-D-ribosyl)-5'-AMP + H2O = 1-(5-phospho-beta-D-ribosyl)-5-[(5-phospho-beta-D-ribosylamino)methylideneamino]imidazole-4-carboxamide. It functions in the pathway amino-acid biosynthesis; L-histidine biosynthesis; L-histidine from 5-phospho-alpha-D-ribose 1-diphosphate: step 3/9. Its function is as follows. Catalyzes the hydrolysis of the adenine ring of phosphoribosyl-AMP. The sequence is that of Phosphoribosyl-AMP cyclohydrolase from Haloquadratum walsbyi (strain DSM 16790 / HBSQ001).